The chain runs to 251 residues: Ubiquitin-conjugating enzyme E2 6 (251 aa).

Over 1–229 (MASIQANKRL…DQDKNPGENS (229 aa)) the chain is Cytoplasmic. In terms of domain architecture, UBC core spans 5–154 (QANKRLTKEY…YSNFKFKNMF (150 aa)). Catalysis depends on C87, which acts as the Glycyl thioester intermediate. Positions 173-185 (AESKGAQQEENKA) are enriched in basic and acidic residues. The interval 173 to 200 (AESKGAQQEENKAQKLATEKATSLDDIS) is disordered. Residues 230–250 (NIKSLLCLILAIAIFFVGLIM) form a helical membrane-spanning segment.

It belongs to the ubiquitin-conjugating enzyme family.

The protein resides in the endoplasmic reticulum membrane. It carries out the reaction S-ubiquitinyl-[E1 ubiquitin-activating enzyme]-L-cysteine + [E2 ubiquitin-conjugating enzyme]-L-cysteine = [E1 ubiquitin-activating enzyme]-L-cysteine + S-ubiquitinyl-[E2 ubiquitin-conjugating enzyme]-L-cysteine.. The protein operates within protein modification; protein ubiquitination. Its function is as follows. Catalyzes the covalent attachment of ubiquitin to other proteins. Functions in degradation of misfolded or regulated proteins localized in the endoplasmic reticulum (ER) lumen or membrane via the ubiquitin-proteasome system. Cognate E2 conjugating enzyme for the DOA10 ubiquitin ligase complex, which is part of the ERAD-C pathway responsible for the rapid degradation of membrane proteins with misfolded cytoplasmic domains. This Kluyveromyces lactis (strain ATCC 8585 / CBS 2359 / DSM 70799 / NBRC 1267 / NRRL Y-1140 / WM37) (Yeast) protein is Ubiquitin-conjugating enzyme E2 6 (UBC6).